Consider the following 337-residue polypeptide: NADH-quinone oxidoreductase subunit H (337 aa).

9 helical membrane passes run 9–29, 50–70, 82–102, 115–135, 161–181, 186–206, 245–265, 273–293, and 313–333; these read GIPL…LLLV, PNVV…KFVF, GIFL…WAVI, VGIL…IMAG, IGFV…TAIV, TIWY…SALA, SILL…LPPI, VPGV…FAMV, and FLPI…GFDI.

This sequence belongs to the complex I subunit 1 family. NDH-1 is composed of 14 different subunits. Subunits NuoA, H, J, K, L, M, N constitute the membrane sector of the complex.

It is found in the cell inner membrane. It carries out the reaction a quinone + NADH + 5 H(+)(in) = a quinol + NAD(+) + 4 H(+)(out). Functionally, NDH-1 shuttles electrons from NADH, via FMN and iron-sulfur (Fe-S) centers, to quinones in the respiratory chain. The immediate electron acceptor for the enzyme in this species is believed to be ubiquinone. Couples the redox reaction to proton translocation (for every two electrons transferred, four hydrogen ions are translocated across the cytoplasmic membrane), and thus conserves the redox energy in a proton gradient. This subunit may bind ubiquinone. The polypeptide is NADH-quinone oxidoreductase subunit H (Parvibaculum lavamentivorans (strain DS-1 / DSM 13023 / NCIMB 13966)).